A 194-amino-acid chain; its full sequence is Peptidyl-tRNA hydrolase (194 aa).

A tRNA-binding site is contributed by Tyr17. The active-site Proton acceptor is His22. TRNA-binding residues include Phe68, Asn70, and Asn116.

The protein belongs to the PTH family. In terms of assembly, monomer.

The protein resides in the cytoplasm. It catalyses the reaction an N-acyl-L-alpha-aminoacyl-tRNA + H2O = an N-acyl-L-amino acid + a tRNA + H(+). In terms of biological role, hydrolyzes ribosome-free peptidyl-tRNAs (with 1 or more amino acids incorporated), which drop off the ribosome during protein synthesis, or as a result of ribosome stalling. Its function is as follows. Catalyzes the release of premature peptidyl moieties from peptidyl-tRNA molecules trapped in stalled 50S ribosomal subunits, and thus maintains levels of free tRNAs and 50S ribosomes. The polypeptide is Peptidyl-tRNA hydrolase (Proteus mirabilis (strain HI4320)).